The primary structure comprises 356 residues: UDP-3-O-acylglucosamine N-acyltransferase (356 aa).

H242 (proton acceptor) is an active-site residue.

This sequence belongs to the transferase hexapeptide repeat family. LpxD subfamily. Homotrimer.

The enzyme catalyses a UDP-3-O-[(3R)-3-hydroxyacyl]-alpha-D-glucosamine + a (3R)-hydroxyacyl-[ACP] = a UDP-2-N,3-O-bis[(3R)-3-hydroxyacyl]-alpha-D-glucosamine + holo-[ACP] + H(+). The protein operates within bacterial outer membrane biogenesis; LPS lipid A biosynthesis. Its function is as follows. Catalyzes the N-acylation of UDP-3-O-acylglucosamine using 3-hydroxyacyl-ACP as the acyl donor. Is involved in the biosynthesis of lipid A, a phosphorylated glycolipid that anchors the lipopolysaccharide to the outer membrane of the cell. The polypeptide is UDP-3-O-acylglucosamine N-acyltransferase (Acinetobacter baumannii (strain AB0057)).